The chain runs to 338 residues: Glycerol-1-phosphate dehydrogenase [NAD(P)+] (338 aa).

NAD(+)-binding positions include 81–85 and 103–106; these read GRPLD and TSAS. Asp-108 contributes to the substrate binding site. Residue Ser-112 coordinates NAD(+). Asp-157 is a binding site for substrate. The Zn(2+) site is built by Asp-157 and His-238. His-242 is a substrate binding site. His-256 provides a ligand contact to Zn(2+).

The protein belongs to the glycerol-1-phosphate dehydrogenase family. In terms of assembly, homodimer. Zn(2+) is required as a cofactor.

Its subcellular location is the cytoplasm. It carries out the reaction sn-glycerol 1-phosphate + NAD(+) = dihydroxyacetone phosphate + NADH + H(+). The enzyme catalyses sn-glycerol 1-phosphate + NADP(+) = dihydroxyacetone phosphate + NADPH + H(+). It participates in membrane lipid metabolism; glycerophospholipid metabolism. In terms of biological role, catalyzes the NAD(P)H-dependent reduction of dihydroxyacetonephosphate (DHAP or glycerone phosphate) to glycerol 1-phosphate (G1P). The G1P thus generated is used as the glycerophosphate backbone of phospholipids in the cellular membranes of Archaea. In Pyrobaculum calidifontis (strain DSM 21063 / JCM 11548 / VA1), this protein is Glycerol-1-phosphate dehydrogenase [NAD(P)+].